The chain runs to 326 residues: Peroxidase 46 (326 aa).

A signal peptide spans 1-27; sequence MASSYRINCSTLLHLLMFLSSLLTSSA. An N-linked (GlcNAc...) asparagine glycan is attached at N28. 4 cysteine pairs are disulfide-bonded: C38–C114, C71–C76, C120–C322, and C199–C233. H69 serves as the catalytic Proton acceptor. D70, V73, G75, D77, and S79 together coordinate Ca(2+). An N-linked (GlcNAc...) asparagine glycan is attached at N85. H192 lines the heme b pocket. T193 is a binding site for Ca(2+). Positions 246, 249, and 254 each coordinate Ca(2+). An N-linked (GlcNAc...) asparagine glycan is attached at N278.

The protein belongs to the peroxidase family. Classical plant (class III) peroxidase subfamily. The cofactor is heme b. It depends on Ca(2+) as a cofactor.

Its subcellular location is the secreted. The catalysed reaction is 2 a phenolic donor + H2O2 = 2 a phenolic radical donor + 2 H2O. In terms of biological role, removal of H(2)O(2), oxidation of toxic reductants, biosynthesis and degradation of lignin, suberization, auxin catabolism, response to environmental stresses such as wounding, pathogen attack and oxidative stress. These functions might be dependent on each isozyme/isoform in each plant tissue. In Arabidopsis thaliana (Mouse-ear cress), this protein is Peroxidase 46 (PER46).